Reading from the N-terminus, the 426-residue chain is Gamma-glutamyl phosphate reductase (426 aa).

It belongs to the gamma-glutamyl phosphate reductase family.

The protein localises to the cytoplasm. It carries out the reaction L-glutamate 5-semialdehyde + phosphate + NADP(+) = L-glutamyl 5-phosphate + NADPH + H(+). It participates in amino-acid biosynthesis; L-proline biosynthesis; L-glutamate 5-semialdehyde from L-glutamate: step 2/2. Catalyzes the NADPH-dependent reduction of L-glutamate 5-phosphate into L-glutamate 5-semialdehyde and phosphate. The product spontaneously undergoes cyclization to form 1-pyrroline-5-carboxylate. The chain is Gamma-glutamyl phosphate reductase from Cupriavidus necator (strain ATCC 17699 / DSM 428 / KCTC 22496 / NCIMB 10442 / H16 / Stanier 337) (Ralstonia eutropha).